A 184-amino-acid polypeptide reads, in one-letter code: NADH-quinone oxidoreductase subunit B (184 aa).

Residues cysteine 63, cysteine 64, cysteine 128, and cysteine 158 each coordinate [4Fe-4S] cluster.

It belongs to the complex I 20 kDa subunit family. As to quaternary structure, NDH-1 is composed of 14 different subunits. Subunits NuoB, C, D, E, F, and G constitute the peripheral sector of the complex. The cofactor is [4Fe-4S] cluster.

It localises to the cell inner membrane. The enzyme catalyses a quinone + NADH + 5 H(+)(in) = a quinol + NAD(+) + 4 H(+)(out). Its function is as follows. NDH-1 shuttles electrons from NADH, via FMN and iron-sulfur (Fe-S) centers, to quinones in the respiratory chain. Couples the redox reaction to proton translocation (for every two electrons transferred, four hydrogen ions are translocated across the cytoplasmic membrane), and thus conserves the redox energy in a proton gradient. The polypeptide is NADH-quinone oxidoreductase subunit B (Stenotrophomonas maltophilia (strain R551-3)).